We begin with the raw amino-acid sequence, 346 residues long: Elongation factor Ts (346 aa).

The interval 80–83 is involved in Mg(2+) ion dislocation from EF-Tu; sequence TDFV.

It belongs to the EF-Ts family.

It localises to the cytoplasm. Its function is as follows. Associates with the EF-Tu.GDP complex and induces the exchange of GDP to GTP. It remains bound to the aminoacyl-tRNA.EF-Tu.GTP complex up to the GTP hydrolysis stage on the ribosome. In Streptococcus pyogenes serotype M1, this protein is Elongation factor Ts.